The primary structure comprises 300 residues: Oxidoreductase BOA1 (300 aa).

It belongs to the NmrA-type oxidoreductase family. Isoflavone reductase subfamily.

It functions in the pathway polyketide biosynthesis. In terms of biological role, oxidoreductase; part of the gene cluster A that mediates the biosynthesis of botcinic acid and its botcinin derivatives, acetate-derived polyketides that contribute to virulence when combined with the sesquiterpene botrydial. Botcinic acid and its derivatives have been shown to induce chlorosis and necrosis during host plant infection, but also have antifungal activities. Two polyketide synthases, BOA6 and BOA9, are involved in the biosynthesis of botcinins. BOA6 mediates the formation of the per-methylated tetraketide core by condensation of four units of malonyl-CoA with one unit of acetyl-CoA, which would be methylated in activated methylene groups to yield a bicyclic acid intermediate that could then either be converted to botrylactone derivatives or lose the starter acetate unit through a retro-Claisen type C-C bond cleavage to yield botcinin derivatives. The second polyketide synthase, BOA9, is probably required for the biosynthesis of the tetraketide side chain of botcinins. The methyltransferase (MT) domain within BOA6 is probably responsible for the incorporation of four methyl groups. The trans-enoyl reductase BOA5 might take over the enoyl reductase function of BOA6 that misses an ER domain. The monooxygenases BOA2, BOA3 and BOA4 might be involved in further hydroxylations at C4, C5 and C8, whereas BOA7, close to BOA9, could potentially be involved in the hydroxylation at C4 in the side chain of botcinins. The protein is Oxidoreductase BOA1 of Botryotinia fuckeliana (strain B05.10) (Noble rot fungus).